A 189-amino-acid chain; its full sequence is Chitin synthase 2 (189 aa).

The protein belongs to the chitin synthase family. Class II subfamily.

Its subcellular location is the cell membrane. It carries out the reaction [(1-&gt;4)-N-acetyl-beta-D-glucosaminyl](n) + UDP-N-acetyl-alpha-D-glucosamine = [(1-&gt;4)-N-acetyl-beta-D-glucosaminyl](n+1) + UDP + H(+). Polymerizes chitin, a structural polymer of the cell wall and septum, by transferring the sugar moiety of UDP-GlcNAc to the non-reducing end of the growing chitin polymer. This is Chitin synthase 2 (chs2) from Aspergillus niger.